A 430-amino-acid polypeptide reads, in one-letter code: Gamma-glutamyl phosphate reductase (430 aa).

This sequence belongs to the gamma-glutamyl phosphate reductase family.

It is found in the cytoplasm. The enzyme catalyses L-glutamate 5-semialdehyde + phosphate + NADP(+) = L-glutamyl 5-phosphate + NADPH + H(+). It functions in the pathway amino-acid biosynthesis; L-proline biosynthesis; L-glutamate 5-semialdehyde from L-glutamate: step 2/2. In terms of biological role, catalyzes the NADPH-dependent reduction of L-glutamate 5-phosphate into L-glutamate 5-semialdehyde and phosphate. The product spontaneously undergoes cyclization to form 1-pyrroline-5-carboxylate. This chain is Gamma-glutamyl phosphate reductase, found in Rhodopseudomonas palustris (strain BisA53).